Reading from the N-terminus, the 352-residue chain is Histidine biosynthesis bifunctional protein HisB (352 aa).

Residues 1 to 164 (MSQKILFIDR…EIENEILSSF (164 aa)) are histidinol-phosphatase. The active-site Nucleophile is the D9. The Mg(2+) site is built by D9 and D11. Residue D11 is the Proton donor of the active site. C93, H95, C101, and C103 together coordinate Zn(2+). Mg(2+) is bound at residue D130. Residues 165-352 (RSASYQRTTK…ENLASSKGVI (188 aa)) are imidazoleglycerol-phosphate dehydratase.

The protein in the N-terminal section; belongs to the histidinol-phosphatase family. It in the C-terminal section; belongs to the imidazoleglycerol-phosphate dehydratase family. It depends on Mg(2+) as a cofactor. Zn(2+) is required as a cofactor.

The protein localises to the cytoplasm. The enzyme catalyses D-erythro-1-(imidazol-4-yl)glycerol 3-phosphate = 3-(imidazol-4-yl)-2-oxopropyl phosphate + H2O. It carries out the reaction L-histidinol phosphate + H2O = L-histidinol + phosphate. Its pathway is amino-acid biosynthesis; L-histidine biosynthesis; L-histidine from 5-phospho-alpha-D-ribose 1-diphosphate: step 6/9. The protein operates within amino-acid biosynthesis; L-histidine biosynthesis; L-histidine from 5-phospho-alpha-D-ribose 1-diphosphate: step 8/9. This is Histidine biosynthesis bifunctional protein HisB from Campylobacter jejuni subsp. jejuni serotype O:2 (strain ATCC 700819 / NCTC 11168).